We begin with the raw amino-acid sequence, 406 residues long: Argininosuccinate synthase (406 aa).

Residues 12-20 (AYSGGLDTS) and A39 each bind ATP. Residues Y90 and S95 each coordinate L-citrulline. G120 is a binding site for ATP. Positions 122, 126, and 127 each coordinate L-aspartate. N126 serves as a coordination point for L-citrulline. L-citrulline is bound by residues R130, S179, S188, E264, and Y276.

It belongs to the argininosuccinate synthase family. Type 1 subfamily. Homotetramer.

The protein resides in the cytoplasm. It carries out the reaction L-citrulline + L-aspartate + ATP = 2-(N(omega)-L-arginino)succinate + AMP + diphosphate + H(+). It participates in amino-acid biosynthesis; L-arginine biosynthesis; L-arginine from L-ornithine and carbamoyl phosphate: step 2/3. This Citrifermentans bemidjiense (strain ATCC BAA-1014 / DSM 16622 / JCM 12645 / Bem) (Geobacter bemidjiensis) protein is Argininosuccinate synthase.